The following is a 264-amino-acid chain: tRNA (guanine-N(1)-)-methyltransferase (264 aa).

S-adenosyl-L-methionine contacts are provided by residues Gly125 and 145-150; that span reads LGDFVL.

Belongs to the RNA methyltransferase TrmD family. Homodimer.

Its subcellular location is the cytoplasm. The enzyme catalyses guanosine(37) in tRNA + S-adenosyl-L-methionine = N(1)-methylguanosine(37) in tRNA + S-adenosyl-L-homocysteine + H(+). Its function is as follows. Specifically methylates guanosine-37 in various tRNAs. The sequence is that of tRNA (guanine-N(1)-)-methyltransferase from Burkholderia lata (strain ATCC 17760 / DSM 23089 / LMG 22485 / NCIMB 9086 / R18194 / 383).